A 239-amino-acid chain; its full sequence is 4-hydroxy-tetrahydrodipicolinate reductase (239 aa).

NAD(+) is bound by residues 8-13 (GSTGKM), 78-80 (GTT), and 102-105 (SANM). The Proton donor/acceptor role is filled by histidine 134. Residue histidine 135 participates in (S)-2,3,4,5-tetrahydrodipicolinate binding. The active-site Proton donor is the lysine 138. 144 to 145 (GT) provides a ligand contact to (S)-2,3,4,5-tetrahydrodipicolinate.

It belongs to the DapB family.

The protein localises to the cytoplasm. It carries out the reaction (S)-2,3,4,5-tetrahydrodipicolinate + NAD(+) + H2O = (2S,4S)-4-hydroxy-2,3,4,5-tetrahydrodipicolinate + NADH + H(+). The catalysed reaction is (S)-2,3,4,5-tetrahydrodipicolinate + NADP(+) + H2O = (2S,4S)-4-hydroxy-2,3,4,5-tetrahydrodipicolinate + NADPH + H(+). Its pathway is amino-acid biosynthesis; L-lysine biosynthesis via DAP pathway; (S)-tetrahydrodipicolinate from L-aspartate: step 4/4. In terms of biological role, catalyzes the conversion of 4-hydroxy-tetrahydrodipicolinate (HTPA) to tetrahydrodipicolinate. The chain is 4-hydroxy-tetrahydrodipicolinate reductase from Rickettsia conorii (strain ATCC VR-613 / Malish 7).